Reading from the N-terminus, the 368-residue chain is MRAEIENYVKKIEQSLELLWRSLDVEASTERLNALEELTADPSLWNDQANAQKLLREKSNLEEKLNAFNKLKSNLKDALELEEMAEAENDLETLSQIEQDLKNLSIIAAKFETECLFSGEADGNNCFLEINAGAGGTESHDWASIMMRMYLRFAERLGFKTEIINMINGEEAGIKSCTIRIIGKRAYGWFKTETGVHRLVRISPFNAAGKRMTSFASSWVYPEIDDNIAITIEDKDLRIDTFRASGAGGQHVNTTDSAVRITHIPTGTVTQCQSDRSQHKNKAQAMKMLQAKLYELEMQKRTDSVNEQNAAKTDNSWGHQIRSYVLQPYHMVKDLRTDYETSDTKGVLDGDLEEFVSAHLAMNVGGKK.

N5-methylglutamine is present on Gln-250.

This sequence belongs to the prokaryotic/mitochondrial release factor family. Post-translationally, methylated by PrmC. Methylation increases the termination efficiency of RF2.

It is found in the cytoplasm. Peptide chain release factor 2 directs the termination of translation in response to the peptide chain termination codons UGA and UAA. The polypeptide is Peptide chain release factor 2 (Rickettsia conorii (strain ATCC VR-613 / Malish 7)).